The chain runs to 301 residues: Probable alpha-L-glutamate ligase (301 aa).

In terms of domain architecture, ATP-grasp spans 104–287; sequence LQLLSRRGIG…VAGIIIEHIE (184 aa). Residues Lys141, 178 to 179, Asp187, and 211 to 213 contribute to the ATP site; these read EY and RSN. 3 residues coordinate Mg(2+): Asp248, Glu260, and Asn262. Mn(2+) contacts are provided by Asp248, Glu260, and Asn262.

This sequence belongs to the RimK family. Mg(2+) serves as cofactor. Requires Mn(2+) as cofactor.

This Pseudomonas fluorescens (strain ATCC BAA-477 / NRRL B-23932 / Pf-5) protein is Probable alpha-L-glutamate ligase.